Here is a 156-residue protein sequence, read N- to C-terminus: Small ribosomal subunit protein uS7 (156 aa).

The protein belongs to the universal ribosomal protein uS7 family. In terms of assembly, part of the 30S ribosomal subunit. Contacts proteins S9 and S11.

Functionally, one of the primary rRNA binding proteins, it binds directly to 16S rRNA where it nucleates assembly of the head domain of the 30S subunit. Is located at the subunit interface close to the decoding center, probably blocks exit of the E-site tRNA. The polypeptide is Small ribosomal subunit protein uS7 (Geobacillus kaustophilus (strain HTA426)).